The following is a 196-amino-acid chain: MRSIEVKGTARTIAERSSEQARALKEIRNNGGVPCVLYGGEEVVHFTVTNEGLRNLVYTPHIYVVDLVIDGKKVNAILKDIQFHPVKDTILHVDFYQIDEAKPIVMEVPVQLEGLAEGVKAGGKLALQMRKLKVKALYNIIPEKLTINVSHLGLGKTVKVGELSYEGLELLNAKEAVVCAVKLTRAARGAAAAAGK.

The protein belongs to the bacterial ribosomal protein bL25 family. CTC subfamily. In terms of assembly, part of the 50S ribosomal subunit; part of the 5S rRNA/L5/L18/L25 subcomplex. Contacts the 5S rRNA. Binds to the 5S rRNA independently of L5 and L18.

In terms of biological role, this is one of the proteins that binds to the 5S RNA in the ribosome where it forms part of the central protuberance. The polypeptide is Large ribosomal subunit protein bL25 (Bacteroides fragilis (strain ATCC 25285 / DSM 2151 / CCUG 4856 / JCM 11019 / LMG 10263 / NCTC 9343 / Onslow / VPI 2553 / EN-2)).